The chain runs to 55 residues: ATP synthase F(0) complex subunit 8 (55 aa).

Residues 4–24 form a helical membrane-spanning segment; that stretch reads LNPSPWLLILLFSWLIFLTML. Residues 36-55 form a disordered region; the sequence is MPSTQNMCKQEPEPWTWPWA.

The protein belongs to the ATPase protein 8 family. As to quaternary structure, component of the ATP synthase complex composed at least of ATP5F1A/subunit alpha, ATP5F1B/subunit beta, ATP5MC1/subunit c (homooctomer), MT-ATP6/subunit a, MT-ATP8/subunit 8, ATP5ME/subunit e, ATP5MF/subunit f, ATP5MG/subunit g, ATP5MK/subunit k, ATP5MJ/subunit j, ATP5F1C/subunit gamma, ATP5F1D/subunit delta, ATP5F1E/subunit epsilon, ATP5PF/subunit F6, ATP5PB/subunit b, ATP5PD/subunit d, ATP5PO/subunit OSCP. ATP synthase complex consists of a soluble F(1) head domain (subunits alpha(3) and beta(3)) - the catalytic core - and a membrane F(0) domain - the membrane proton channel (subunits c, a, 8, e, f, g, k and j). These two domains are linked by a central stalk (subunits gamma, delta, and epsilon) rotating inside the F1 region and a stationary peripheral stalk (subunits F6, b, d, and OSCP).

It is found in the mitochondrion membrane. Subunit 8, of the mitochondrial membrane ATP synthase complex (F(1)F(0) ATP synthase or Complex V) that produces ATP from ADP in the presence of a proton gradient across the membrane which is generated by electron transport complexes of the respiratory chain. ATP synthase complex consist of a soluble F(1) head domain - the catalytic core - and a membrane F(1) domain - the membrane proton channel. These two domains are linked by a central stalk rotating inside the F(1) region and a stationary peripheral stalk. During catalysis, ATP synthesis in the catalytic domain of F(1) is coupled via a rotary mechanism of the central stalk subunits to proton translocation. In vivo, can only synthesize ATP although its ATP hydrolase activity can be activated artificially in vitro. Part of the complex F(0) domain. This Latimeria chalumnae (Coelacanth) protein is ATP synthase F(0) complex subunit 8.